The sequence spans 906 residues: DNA mismatch repair protein MutS (906 aa).

Gly656 to Ser663 provides a ligand contact to ATP.

It belongs to the DNA mismatch repair MutS family.

Functionally, this protein is involved in the repair of mismatches in DNA. It is possible that it carries out the mismatch recognition step. This protein has a weak ATPase activity. This Rhodopseudomonas palustris (strain BisA53) protein is DNA mismatch repair protein MutS.